An 853-amino-acid chain; its full sequence is DNA mismatch repair protein MutS (853 aa).

614 to 621 (GPNMGGKS) is an ATP binding site.

This sequence belongs to the DNA mismatch repair MutS family.

In terms of biological role, this protein is involved in the repair of mismatches in DNA. It is possible that it carries out the mismatch recognition step. This protein has a weak ATPase activity. The sequence is that of DNA mismatch repair protein MutS from Klebsiella pneumoniae subsp. pneumoniae (strain ATCC 700721 / MGH 78578).